The primary structure comprises 208 residues: Uracil phosphoribosyltransferase (208 aa).

5-phospho-alpha-D-ribose 1-diphosphate-binding positions include R78, R103, and 130–138 (DPMLATANS). Uracil contacts are provided by residues I193 and 198–200 (GDA). D199 lines the 5-phospho-alpha-D-ribose 1-diphosphate pocket.

Belongs to the UPRTase family. Requires Mg(2+) as cofactor.

It catalyses the reaction UMP + diphosphate = 5-phospho-alpha-D-ribose 1-diphosphate + uracil. The protein operates within pyrimidine metabolism; UMP biosynthesis via salvage pathway; UMP from uracil: step 1/1. With respect to regulation, allosterically activated by GTP. Catalyzes the conversion of uracil and 5-phospho-alpha-D-ribose 1-diphosphate (PRPP) to UMP and diphosphate. The chain is Uracil phosphoribosyltransferase from Brucella canis (strain ATCC 23365 / NCTC 10854 / RM-666).